The primary structure comprises 102 residues: DET1- and DDB1-associated protein 1 (102 aa).

Residues 67 to 102 (NAAKKRDQEQVEIEGENSAPPRKIARTDSQDMNEDT) are disordered.

This sequence belongs to the DDA1 family. Component of numerous DCX (DDB1-CUL4-X-box) E3 ubiquitin-protein ligase complexes which consist of a core of DDB1, cullin-4 (CUL4A or CUL4B), DDA1 and RBX1.

Its pathway is protein modification; protein ubiquitination. Functionally, functions as a component of numerous distinct DCX (DDB1-CUL4-X-box) E3 ubiquitin-protein ligase complexes which mediate the ubiquitination and subsequent proteasomal degradation of target proteins. In the DCX complexes, acts as a scaffolding subunit required to stabilize the complex. This chain is DET1- and DDB1-associated protein 1, found in Gallus gallus (Chicken).